Here is a 323-residue protein sequence, read N- to C-terminus: Thymidylate synthase (323 aa).

DUMP is bound by residues Arg-21 and Arg-172 to Arg-173. Residue Cys-192 is the Nucleophile of the active site. Residues Arg-214–Asp-217, Asn-225, and His-255–Tyr-257 contribute to the dUMP site. Asp-217 is a (6R)-5,10-methylene-5,6,7,8-tetrahydrofolate binding site. Ala-322 contributes to the (6R)-5,10-methylene-5,6,7,8-tetrahydrofolate binding site.

The protein belongs to the thymidylate synthase family. Bacterial-type ThyA subfamily. Homodimer.

It is found in the cytoplasm. It carries out the reaction dUMP + (6R)-5,10-methylene-5,6,7,8-tetrahydrofolate = 7,8-dihydrofolate + dTMP. The protein operates within pyrimidine metabolism; dTTP biosynthesis. Catalyzes the reductive methylation of 2'-deoxyuridine-5'-monophosphate (dUMP) to 2'-deoxythymidine-5'-monophosphate (dTMP) while utilizing 5,10-methylenetetrahydrofolate (mTHF) as the methyl donor and reductant in the reaction, yielding dihydrofolate (DHF) as a by-product. This enzymatic reaction provides an intracellular de novo source of dTMP, an essential precursor for DNA biosynthesis. The sequence is that of Thymidylate synthase from Pseudomonas putida (strain ATCC 47054 / DSM 6125 / CFBP 8728 / NCIMB 11950 / KT2440).